The sequence spans 165 residues: UPF0303 protein Bamb_1459 (165 aa).

Belongs to the UPF0303 family.

The polypeptide is UPF0303 protein Bamb_1459 (Burkholderia ambifaria (strain ATCC BAA-244 / DSM 16087 / CCUG 44356 / LMG 19182 / AMMD) (Burkholderia cepacia (strain AMMD))).